The following is a 203-amino-acid chain: Mitotic spindle assembly checkpoint protein MAD2A (203 aa).

The HORMA domain occupies 14-196; that stretch reads KGSTEIVTEF…TTIHKVESMV (183 aa). A required for assuming the closed conformation and for interaction with cdc20 region spans residues 194-203; sequence SMVAYKISND.

Belongs to the MAD2 family. Interacts with cdc20.

Its subcellular location is the nucleus. The protein localises to the chromosome. The protein resides in the centromere. It localises to the kinetochore. It is found in the cytoplasm. Its function is as follows. Component of the spindle-assembly checkpoint that prevents the onset of anaphase until all chromosomes are properly aligned at the metaphase plate. Required for the execution of the mitotic checkpoint which monitors the process of kinetochore-spindle attachment and inhibits the activity of the anaphase promoting complex until all chromosomes are aligned at the metaphase plate. This chain is Mitotic spindle assembly checkpoint protein MAD2A (mad2l1-1), found in Dictyostelium discoideum (Social amoeba).